The chain runs to 252 residues: Imidazole glycerol phosphate synthase subunit HisF (252 aa).

Catalysis depends on residues Asp-11 and Asp-130.

Belongs to the HisA/HisF family. As to quaternary structure, heterodimer of HisH and HisF.

It is found in the cytoplasm. It carries out the reaction 5-[(5-phospho-1-deoxy-D-ribulos-1-ylimino)methylamino]-1-(5-phospho-beta-D-ribosyl)imidazole-4-carboxamide + L-glutamine = D-erythro-1-(imidazol-4-yl)glycerol 3-phosphate + 5-amino-1-(5-phospho-beta-D-ribosyl)imidazole-4-carboxamide + L-glutamate + H(+). It functions in the pathway amino-acid biosynthesis; L-histidine biosynthesis; L-histidine from 5-phospho-alpha-D-ribose 1-diphosphate: step 5/9. Its function is as follows. IGPS catalyzes the conversion of PRFAR and glutamine to IGP, AICAR and glutamate. The HisF subunit catalyzes the cyclization activity that produces IGP and AICAR from PRFAR using the ammonia provided by the HisH subunit. The protein is Imidazole glycerol phosphate synthase subunit HisF of Lactiplantibacillus plantarum (strain ATCC BAA-793 / NCIMB 8826 / WCFS1) (Lactobacillus plantarum).